Reading from the N-terminus, the 169-residue chain is Crossover junction endodeoxyribonuclease RuvC (169 aa).

Residues D12, E72, and D144 contribute to the active site. Residues D12, E72, and D144 each coordinate Mg(2+).

This sequence belongs to the RuvC family. Homodimer which binds Holliday junction (HJ) DNA. The HJ becomes 2-fold symmetrical on binding to RuvC with unstacked arms; it has a different conformation from HJ DNA in complex with RuvA. In the full resolvosome a probable DNA-RuvA(4)-RuvB(12)-RuvC(2) complex forms which resolves the HJ. It depends on Mg(2+) as a cofactor.

The protein resides in the cytoplasm. It catalyses the reaction Endonucleolytic cleavage at a junction such as a reciprocal single-stranded crossover between two homologous DNA duplexes (Holliday junction).. Functionally, the RuvA-RuvB-RuvC complex processes Holliday junction (HJ) DNA during genetic recombination and DNA repair. Endonuclease that resolves HJ intermediates. Cleaves cruciform DNA by making single-stranded nicks across the HJ at symmetrical positions within the homologous arms, yielding a 5'-phosphate and a 3'-hydroxyl group; requires a central core of homology in the junction. The consensus cleavage sequence is 5'-(A/T)TT(C/G)-3'. Cleavage occurs on the 3'-side of the TT dinucleotide at the point of strand exchange. HJ branch migration catalyzed by RuvA-RuvB allows RuvC to scan DNA until it finds its consensus sequence, where it cleaves and resolves the cruciform DNA. The sequence is that of Crossover junction endodeoxyribonuclease RuvC from Xanthobacter autotrophicus (strain ATCC BAA-1158 / Py2).